The following is a 114-amino-acid chain: Large ribosomal subunit protein bL20c (114 aa).

Belongs to the bacterial ribosomal protein bL20 family.

Its subcellular location is the plastid. It localises to the chloroplast. Functionally, binds directly to 23S ribosomal RNA and is necessary for the in vitro assembly process of the 50S ribosomal subunit. It is not involved in the protein synthesizing functions of that subunit. This chain is Large ribosomal subunit protein bL20c, found in Psilotum nudum (Whisk fern).